The following is a 640-amino-acid chain: Probable inactive receptor kinase At3g08680 (640 aa).

A signal peptide spans 1–22; that stretch reads MMKIIAAFLFLLVTTFVSRCLS. 5 LRR repeats span residues 93–115, 117–138, 139–162, 163–185, and 186–206; these read ALRI…ILSL, FIRS…VLSH, RLVN…QNLT, QLTD…PPRL, and KYLN…VKSF. Positions 222–249 are disordered; sequence LTPCPENTTAPSPSPTTPTEGPGTTNIG. The span at 226–247 shows a compositional bias: low complexity; the sequence is PENTTAPSPSPTTPTEGPGTTN. Residues 260–280 form a helical membrane-spanning segment; sequence GAIVGIAVGGSVLLFIILAII. The interval 289–315 is disordered; that stretch reads DGGQDSTAVPKAKPGRSDNKAEEFGSG. Residues 341–614 form the Protein kinase domain; it reads RASAEVLGKG…EEVVNMMEEI (274 aa). Residue serine 343 is modified to Phosphoserine. Position 347–355 (347–355) interacts with ATP; the sequence is LGKGSYGTT. Threonine 364 carries the post-translational modification Phosphothreonine. Residue lysine 369 participates in ATP binding. 3 positions are modified to phosphothreonine: threonine 441, threonine 514, and threonine 564. The interval 612–640 is disordered; sequence EEIRPSGSGPGSGNRASSPEMIRSSDSPV.

This sequence belongs to the protein kinase superfamily. Tyr protein kinase family.

The protein resides in the membrane. This is Probable inactive receptor kinase At3g08680 from Arabidopsis thaliana (Mouse-ear cress).